We begin with the raw amino-acid sequence, 299 residues long: Oxygen-dependent coproporphyrinogen-III oxidase (299 aa).

Serine 92 serves as a coordination point for substrate. Residues histidine 96 and histidine 106 each contribute to the a divalent metal cation site. The active-site Proton donor is histidine 106. 108–110 serves as a coordination point for substrate; sequence NVR. A divalent metal cation contacts are provided by histidine 145 and histidine 175. The interval 240-275 is important for dimerization; the sequence is YVEFNLVWDRGTLFGLQTGGRTESILMSMPPLVRWE. 258–260 provides a ligand contact to substrate; sequence GGR.

The protein belongs to the aerobic coproporphyrinogen-III oxidase family. Homodimer. Requires a divalent metal cation as cofactor.

The protein localises to the cytoplasm. The catalysed reaction is coproporphyrinogen III + O2 + 2 H(+) = protoporphyrinogen IX + 2 CO2 + 2 H2O. It functions in the pathway porphyrin-containing compound metabolism; protoporphyrin-IX biosynthesis; protoporphyrinogen-IX from coproporphyrinogen-III (O2 route): step 1/1. Involved in the heme biosynthesis. Catalyzes the aerobic oxidative decarboxylation of propionate groups of rings A and B of coproporphyrinogen-III to yield the vinyl groups in protoporphyrinogen-IX. The sequence is that of Oxygen-dependent coproporphyrinogen-III oxidase from Shigella flexneri.